The chain runs to 47 residues: Defensin-like protein 2 (47 aa).

4 cysteine pairs are disulfide-bonded: C5–C47, C16–C36, C22–C43, and C26–C45.

The protein belongs to the DEFL family.

Its function is as follows. Fabatins have antibacterial activity against Gram-positive and Gram-negative bacteria. High activity against P.aeruginosa. No activity against S.cerevisiae and C.albicans. This chain is Defensin-like protein 2, found in Vicia faba (Broad bean).